We begin with the raw amino-acid sequence, 109 residues long: DNA-binding protein Mpal_0536 (109 aa).

The interval 14–35 (MAQLQSQQMDQQQMDEEKQRAK) is disordered. The span at 16-25 (QLQSQQMDQQ) shows a compositional bias: low complexity.

The protein belongs to the PDCD5 family.

The sequence is that of DNA-binding protein Mpal_0536 from Methanosphaerula palustris (strain ATCC BAA-1556 / DSM 19958 / E1-9c).